Here is a 203-residue protein sequence, read N- to C-terminus: Holliday junction branch migration complex subunit RuvA (203 aa).

The domain I stretch occupies residues 1 to 64; sequence MIGRLRGIVL…EDAQLLFGFN (64 aa). A domain II region spans residues 65–142; that stretch reads NKQERTLFRE…KGLHGDLFTP (78 aa). The interval 143-154 is flexible linker; the sequence is AADLVLTSPASP. The interval 155 to 203 is domain III; sequence AVDDAEAEAVAALVSLGYKPQEASRMVSKVAQADASSETLIREALRAAL.

Belongs to the RuvA family. In terms of assembly, homotetramer. Forms an RuvA(8)-RuvB(12)-Holliday junction (HJ) complex. HJ DNA is sandwiched between 2 RuvA tetramers; dsDNA enters through RuvA and exits via RuvB. An RuvB hexamer assembles on each DNA strand where it exits the tetramer. Each RuvB hexamer is contacted by two RuvA subunits (via domain III) on 2 adjacent RuvB subunits; this complex drives branch migration. In the full resolvosome a probable DNA-RuvA(4)-RuvB(12)-RuvC(2) complex forms which resolves the HJ.

It localises to the cytoplasm. Its function is as follows. The RuvA-RuvB-RuvC complex processes Holliday junction (HJ) DNA during genetic recombination and DNA repair, while the RuvA-RuvB complex plays an important role in the rescue of blocked DNA replication forks via replication fork reversal (RFR). RuvA specifically binds to HJ cruciform DNA, conferring on it an open structure. The RuvB hexamer acts as an ATP-dependent pump, pulling dsDNA into and through the RuvAB complex. HJ branch migration allows RuvC to scan DNA until it finds its consensus sequence, where it cleaves and resolves the cruciform DNA. The polypeptide is Holliday junction branch migration complex subunit RuvA (Cronobacter sakazakii (strain ATCC BAA-894) (Enterobacter sakazakii)).